A 95-amino-acid polypeptide reads, in one-letter code: Small ribosomal subunit protein uS17 (95 aa).

This sequence belongs to the universal ribosomal protein uS17 family. In terms of assembly, part of the 30S ribosomal subunit.

Functionally, one of the primary rRNA binding proteins, it binds specifically to the 5'-end of 16S ribosomal RNA. The sequence is that of Small ribosomal subunit protein uS17 from Mycoplasmopsis synoviae (strain 53) (Mycoplasma synoviae).